A 270-amino-acid chain; its full sequence is Alpha N-terminal protein methyltransferase 1 (270 aa).

Residues Gly114, Arg119, 137 to 139, 165 to 166, and Gln180 contribute to the S-adenosyl-L-methionine site; these read EQN and LQ.

It belongs to the methyltransferase superfamily. NTM1 family.

The catalysed reaction is N-terminal L-alanyl-L-prolyl-L-lysyl-[protein] + 3 S-adenosyl-L-methionine = N-terminal N,N,N-trimethyl-L-alanyl-L-prolyl-L-lysyl-[protein] + 3 S-adenosyl-L-homocysteine + 3 H(+). The enzyme catalyses N-terminal L-seryl-L-prolyl-L-lysyl-[protein] + 3 S-adenosyl-L-methionine = N-terminal N,N,N-trimethyl-L-seryl-L-prolyl-L-lysyl-[protein] + 3 S-adenosyl-L-homocysteine + 3 H(+). It carries out the reaction N-terminal L-prolyl-L-prolyl-L-lysyl-[protein] + 2 S-adenosyl-L-methionine = N-terminal N,N-dimethyl-L-prolyl-L-prolyl-L-lysyl-[protein] + 2 S-adenosyl-L-homocysteine + 2 H(+). Functionally, alpha-N-methyltransferase that methylates the N-terminus of target proteins containing the N-terminal motif [Ala/Pro/Ser]-Pro-Lys when the initiator Met is cleaved. Specifically catalyzes mono-, di- or tri-methylation of exposed alpha-amino group of Ala or Ser residue in the [Ala/Ser]-Pro-Lys motif and mono- or di-methylation of Pro in the Pro-Pro-Lys motif. The protein is Alpha N-terminal protein methyltransferase 1 of Dictyostelium discoideum (Social amoeba).